Consider the following 222-residue polypeptide: GMP/IMP nucleotidase YrfG (222 aa).

The Nucleophile role is filled by Asp9. The Mg(2+) site is built by Asp9 and Asp11. Residues 9 to 11 (DVD) and Lys149 contribute to the substrate site. A Mg(2+)-binding site is contributed by Asp174.

The protein belongs to the HAD-like hydrolase superfamily. Mg(2+) serves as cofactor. It depends on Mn(2+) as a cofactor. Requires Co(2+) as cofactor. The cofactor is Zn(2+).

The catalysed reaction is a ribonucleoside 5'-phosphate + H2O = a ribonucleoside + phosphate. Catalyzes the dephosphorylation of different purine nucleotides (GMP and IMP). Also hydrolyzes flavin mononucleotide (FMN). This Escherichia coli (strain K12) protein is GMP/IMP nucleotidase YrfG (yrfG).